Consider the following 436-residue polypeptide: Enolase 1 (436 aa).

Serine 40 serves as a coordination point for Mg(2+). Cysteine 147 and cysteine 169 are oxidised to a cystine. Residues glutamine 164 and glutamate 208 each coordinate (2R)-2-phosphoglycerate. The Proton donor role is filled by glutamate 208. 3 residues coordinate Mg(2+): aspartate 243, glutamate 296, and aspartate 322. Residue aspartate 322 coordinates (2R)-2-phosphoglycerate. The Proton acceptor role is filled by lysine 347. (2R)-2-phosphoglycerate-binding residues include arginine 376 and serine 377.

This sequence belongs to the enolase family. As to quaternary structure, homodimer. Homotetramer. Interacts with methyltransferase METH; the interaction inhibits METH catalytic activity; 2-phosphoglycerate binding to ENO prevents the interaction with METH. The cofactor is Mg(2+).

The protein resides in the cytoplasm. The protein localises to the nucleus. The catalysed reaction is (2R)-2-phosphoglycerate = phosphoenolpyruvate + H2O. It functions in the pathway carbohydrate degradation; glycolysis; pyruvate from D-glyceraldehyde 3-phosphate: step 4/5. In terms of biological role, glycolytic enzyme that catalyzes the conversion of 2-phosphoglycerate to phosphoenolpyruvate. Inhibits tRNA methyltransferase METH catalytic activity in the absence of 2-phosphoglycerate. The sequence is that of Enolase 1 from Entamoeba histolytica (strain ATCC 30459 / HM-1:IMSS / ABRM).